We begin with the raw amino-acid sequence, 599 residues long: Crinkler effector protein 8 (599 aa).

The signal sequence occupies residues 1-17 (MVTLFCAVVGVAGSTFP). The LQLFLAK domain stretch occupies residues 18 to 52 (VDINENKSVGHLKKAIKEEKMYQFPADELQLFLAK). Residue Asn-23 is glycosylated (N-linked (GlcNAc...) asparagine). Residues 53–109 (AGGNAWLSSLTEDVKKLKKGEKTALVKSLTQEEKELQGEDPISECLEGMDPPKVKQI) form a DWL domain region. The HVLVXXP motif motif lies at 110–116 (HVLVALP). The C-terminal D2 effector domain stretch occupies residues 117–590 (PGTSSAPISD…EAAEQESQGK (474 aa)). Phosphoserine is present on residues Ser-249, Ser-281, and Ser-385. The Protein kinase domain occupies 289-590 (LSKKLVWSYG…EAAEQESQGK (302 aa)). Catalysis depends on Asp-470, which acts as the Proton acceptor. Residues Ser-474 and Ser-587 each carry the phosphoserine modification. The tract at residues 577–599 (RFEREAAEQESQGKGVRKKHRRA) is disordered. The Host nuclear localization signal signature appears at 590 to 599 (KGVRKKHRRA).

This sequence in the N-terminal section; belongs to the Crinkler effector family. It in the C-terminal section; belongs to the protein kinase superfamily. In terms of assembly, dimerizes in host plants. In terms of processing, autophosphorylated at Ser-249, Ser-281, Ser-385, Ser-474 and Ser-587. Additional serines or threonines are also targeted for phosphorylation.

The protein resides in the secreted. The protein localises to the host nucleus. It catalyses the reaction L-seryl-[protein] + ATP = O-phospho-L-seryl-[protein] + ADP + H(+). The catalysed reaction is L-threonyl-[protein] + ATP = O-phospho-L-threonyl-[protein] + ADP + H(+). Functionally, secreted effector that induces cell death when expressed in host plants. Acts as a kinase and is able to autophosphorylate, however its cell death inducing ability is not a direct result of its kinase activity, but rather a consequence of the phosphorylated state of the five identified serine residues in the CRN8 protein. The sequence is that of Crinkler effector protein 8 from Phytophthora infestans (Potato late blight agent).